The primary structure comprises 630 residues: YTH domain-containing family protein 1 (630 aa).

3 disordered regions span residues 38 to 113 (DMTQ…YMQQ), 160 to 183 (YYPQ…AGPY), and 200 to 241 (QVGD…QSGH). Residues 70–102 (PGQQQQHQYGSPPNTNGNAQPMPQAHGNNTMNS) show a composition bias toward polar residues. Residues 382–590 (EKYFILKSLT…SVGRKLTGLF (209 aa)) enclose the YTH domain.

Belongs to the YTHDF family. YTHDF1 subfamily.

The protein resides in the cytoplasm. It is found in the P-body. Its function is as follows. Specifically recognizes and binds N6-methyladenosine (m6A)-containing mRNAs, and regulates their stability. M6A is a modification present at internal sites of mRNAs and some non-coding RNAs and plays a role in mRNA stability and processing. Plays a role in pathogenicity towards plant host. In Pyricularia oryzae (strain 70-15 / ATCC MYA-4617 / FGSC 8958) (Rice blast fungus), this protein is YTH domain-containing family protein 1.